The chain runs to 313 residues: Ubiquitin-conjugating enzyme E2 Z (313 aa).

Positions 58-212 (QCVLRIKRDI…IRHETIRVAV (155 aa)) constitute a UBC core domain. Residue cysteine 147 is the Glycyl thioester intermediate of the active site. Residues 283-313 (VREKHRKETVDIDSDSSSSETETDTQGSSNP) are disordered. Residues 297–313 (DSSSSETETDTQGSSNP) are compositionally biased toward low complexity.

Belongs to the ubiquitin-conjugating enzyme family.

It is found in the cytoplasm. The protein resides in the nucleus. The enzyme catalyses S-ubiquitinyl-[E1 ubiquitin-activating enzyme]-L-cysteine + [E2 ubiquitin-conjugating enzyme]-L-cysteine = [E1 ubiquitin-activating enzyme]-L-cysteine + S-ubiquitinyl-[E2 ubiquitin-conjugating enzyme]-L-cysteine.. It participates in protein modification; protein ubiquitination. Its function is as follows. Catalyzes the covalent attachment of ubiquitin to other proteins. May be involved in apoptosis regulation. This is Ubiquitin-conjugating enzyme E2 Z (ube2z) from Xenopus tropicalis (Western clawed frog).